A 157-amino-acid polypeptide reads, in one-letter code: Protein Smg homolog (157 aa).

Belongs to the Smg family.

The polypeptide is Protein Smg homolog (Xanthomonas oryzae pv. oryzae (strain MAFF 311018)).